The sequence spans 226 residues: Agamous-like MADS-box protein AGL23 (226 aa).

Positions 6–66 (LGRRKVEIVK…GKVFSFGHPN (61 aa)) constitute an MADS-box domain. Residues 95–132 (VQMLNKSYTEVKAEVEKEQKNKQSRAQNERENENAEEW) adopt a coiled-coil conformation. Basic and acidic residues predominate over residues 108-127 (EVEKEQKNKQSRAQNERENE). The interval 108-131 (EVEKEQKNKQSRAQNERENENAEE) is disordered.

The protein localises to the nucleus. Functionally, probable transcription factor that controls female gametophyte (megagametogenesis) development and chloroplast biogenesis during embryo development. This Arabidopsis thaliana (Mouse-ear cress) protein is Agamous-like MADS-box protein AGL23.